The sequence spans 270 residues: Small ribosomal subunit protein uS3 (270 aa).

The KH type-2 domain maps to 38-106 (IRQMLTRGME…QVQLNILEVK (69 aa)). The segment at 212–270 (EREAAQAAQRAAGPQRRERPGRRRRGGGGGGGQQQQQAEKATAQATEAAKAAKSGNEGS) is disordered. 2 stretches are compositionally biased toward low complexity: residues 216 to 225 (AQAAQRAAGP) and 245 to 263 (QQQQ…AKAA).

This sequence belongs to the universal ribosomal protein uS3 family. As to quaternary structure, part of the 30S ribosomal subunit. Forms a tight complex with proteins S10 and S14.

Binds the lower part of the 30S subunit head. Binds mRNA in the 70S ribosome, positioning it for translation. The polypeptide is Small ribosomal subunit protein uS3 (Thermobifida fusca (strain YX)).